The following is a 258-amino-acid chain: Probable N-acetylglucosaminyl-phosphatidylinositol de-N-acetylase (258 aa).

Residues 147-170 (KSSSTTTTSTTSSSSSSSSLSNRT) form a disordered region. A compositionally biased stretch (low complexity) spans 148–170 (SSSTTTTSTTSSSSSSSSLSNRT).

It belongs to the PIGL family.

It localises to the endoplasmic reticulum membrane. The catalysed reaction is a 6-(N-acetyl-alpha-D-glucosaminyl)-1-(1,2-diacyl-sn-glycero-3-phospho)-1D-myo-inositol + H2O = a 6-(alpha-D-glucosaminyl)-1-(1,2-diacyl-sn-glycero-3-phospho)-1D-myo-inositol + acetate. It functions in the pathway glycolipid biosynthesis; glycosylphosphatidylinositol-anchor biosynthesis. Involved in the second step of GPI biosynthesis. De-N-acetylation of N-acetylglucosaminyl-phosphatidylinositol. This chain is Probable N-acetylglucosaminyl-phosphatidylinositol de-N-acetylase (pigl), found in Dictyostelium discoideum (Social amoeba).